The chain runs to 859 residues: Homeobox-leucine zipper protein HOX32 (859 aa).

A disordered region spans residues 7-31 (AAVHGVGRQDRSSPGGGGAPQVDTG). A DNA-binding region (homeobox) is located at residues 29 to 92 (DTGKYVRYTP…NRRCREKQRK (64 aa)). Residues 100–129 (VNRKLTAMNKLLMEENDRLQKQVSRLVYEN) are a coiled coil. Residues 146-164 (TSCESVVTSGQHHQQQNPA) are compositionally biased toward polar residues. Positions 146–172 (TSCESVVTSGQHHQQQNPAATRPQRDA) are disordered. In terms of domain architecture, START spans 171-393 (DANNPAGLLA…LRHIRQIAHE (223 aa)).

It belongs to the HD-ZIP homeobox family. Class III subfamily. As to expression, expressed in seedlings, roots, stems, leaf sheaths and blades and panicles.

The protein resides in the nucleus. Functionally, probable transcription factor. The sequence is that of Homeobox-leucine zipper protein HOX32 (HOX32) from Oryza sativa subsp. japonica (Rice).